The following is a 500-amino-acid chain: Signal transduction histidine-protein kinase/phosphatase UhpB (500 aa).

A run of 8 helical transmembrane segments spans residues Leu-8–Ile-28, Val-78–Ala-98, Leu-112–Gly-132, Ala-140–His-160, His-185–Ala-205, Leu-207–Trp-224, Ala-231–His-249, and Val-253–Ile-273. Residues Gln-274–Val-500 are Cytoplasmic-facing. The 189-residue stretch at Glu-311–Tyr-499 folds into the Histidine kinase domain. His-313 bears the Phosphohistidine; by autocatalysis mark.

In terms of processing, autophosphorylated.

It localises to the cell inner membrane. It carries out the reaction ATP + protein L-histidine = ADP + protein N-phospho-L-histidine.. In terms of biological role, part of the UhpABC signaling cascade that controls the expression of the hexose phosphate transporter UhpT. UhpB functions as a membrane-associated protein kinase that autophosphorylates in response to interaction with UhpC, and subsequently transfers its phosphate group to the response regulator UhpA. Can also dephosphorylate UhpA. The protein is Signal transduction histidine-protein kinase/phosphatase UhpB (uhpB) of Salmonella typhimurium (strain LT2 / SGSC1412 / ATCC 700720).